Consider the following 513-residue polypeptide: Putative ribose/galactose/methyl galactoside import ATP-binding protein 2 (513 aa).

ABC transporter domains are found at residues 24-260 (LTAE…VGRE) and 270-510 (VPIG…VMEL). 56 to 63 (GENGAGKS) is a binding site for ATP.

Belongs to the ABC transporter superfamily. Carbohydrate importer 2 (CUT2) (TC 3.A.1.2) family.

Its subcellular location is the cell inner membrane. It carries out the reaction D-ribose(out) + ATP + H2O = D-ribose(in) + ADP + phosphate + H(+). The catalysed reaction is D-galactose(out) + ATP + H2O = D-galactose(in) + ADP + phosphate + H(+). Its function is as follows. Part of an ABC transporter complex involved in carbohydrate import. Could be involved in ribose, galactose and/or methyl galactoside import. Responsible for energy coupling to the transport system. This is Putative ribose/galactose/methyl galactoside import ATP-binding protein 2 from Rhizobium meliloti (strain 1021) (Ensifer meliloti).